The chain runs to 521 residues: Bifunctional dihydrofolate reductase-thymidylate synthase (521 aa).

The region spanning 17–194 (NYQVVVAGTR…IRHSFVSFVR (178 aa)) is the DHFR domain. V21 contributes to the substrate binding site. NADP(+) is bound by residues A23 and 29–35 (GIGKDGV). D43 is a binding site for substrate. NADP(+)-binding positions include 67-69 (RKT) and 88-91 (LTRS). I130 is a binding site for substrate. Residue 131–138 (GGGQVLRE) participates in NADP(+) binding. Residue T151 participates in substrate binding. A thymidylate synthase region spans residues 197-521 (KSVAETHESN…HQKIEMKMAV (325 aa)). R258 contributes to the dUMP binding site. The active site involves C403. Residues H404, 422 to 426 (QRSAD), N434, and 464 to 466 (HVY) each bind dUMP.

This sequence in the N-terminal section; belongs to the dihydrofolate reductase family. In the C-terminal section; belongs to the thymidylate synthase family.

The enzyme catalyses (6S)-5,6,7,8-tetrahydrofolate + NADP(+) = 7,8-dihydrofolate + NADPH + H(+). The catalysed reaction is dUMP + (6R)-5,10-methylene-5,6,7,8-tetrahydrofolate = 7,8-dihydrofolate + dTMP. It participates in cofactor biosynthesis; tetrahydrofolate biosynthesis; 5,6,7,8-tetrahydrofolate from 7,8-dihydrofolate: step 1/1. In terms of biological role, bifunctional enzyme. Involved in de novo dTMP biosynthesis. Key enzyme in folate metabolism. Can play two different roles depending on the source of dihydrofolate: de novo synthesis of tetrahydrofolate or recycling of the dihydrofolate released as one of the end products of the TS catalyzed reaction. Catalyzes an essential reaction for de novo glycine and purine synthesis, DNA precursor synthesis, and for the conversion of dUMP to dTMP. The protein is Bifunctional dihydrofolate reductase-thymidylate synthase (DRTS) of Zea mays (Maize).